The sequence spans 288 residues: MNNLSFSELCCLFCCPPCPGKIASKLAFLPPDPTYTLICDESGSRWTLHLSERADWQYSSREKDAIECFMTRTSRGNRIACMFVRCSPNAKYTLLFSHGNAVDLGQMSSFYIGLGSRINCNIFSYDYSGYGSSSGKPSEKNLYADIDAAWIALRTRYGIRPEHVIIYGQSIGTVPSVDLAARYESAAVILHSPLTSGMRVAFPDTKKTYCFDAFPNIDKISKITSPVLIIHGTEDEVIDFSHGLALFERCQRPVEPLWVEGAGHNDVELYGQYLERLKQFVTQELVNL.

Catalysis depends on charge relay system residues Ser170, Asp235, and His264.

It belongs to the AB hydrolase superfamily. ABHD17 family. Palmitoylated on cysteine residues located in a cysteine cluster at the N-terminus which promotes membrane localization.

The protein resides in the cell membrane. The protein localises to the recycling endosome membrane. Its subcellular location is the cell projection. It is found in the dendritic spine. It localises to the postsynaptic density membrane. The enzyme catalyses S-hexadecanoyl-L-cysteinyl-[protein] + H2O = L-cysteinyl-[protein] + hexadecanoate + H(+). Functionally, hydrolyzes fatty acids from S-acylated cysteine residues in proteins. The sequence is that of Alpha/beta hydrolase domain-containing protein 17B from Xenopus tropicalis (Western clawed frog).